The sequence spans 361 residues: Glycerophosphodiester phosphodiesterase GDPD1, chloroplastic (361 aa).

A chloroplast-targeting transit peptide spans 1–53 (MSLKAIHVSEVPSLDHFPENPSLICSSRKANNKFVVVGHRGHGMNMSQSPDLR). A GP-PDE domain is found at 54-323 (FSALKENSIL…DHVEEITEAV (270 aa)).

This sequence belongs to the glycerophosphoryl diester phosphodiesterase family. Requires Mg(2+) as cofactor. As to expression, expressed in roots, shoots, rosette leaves, stems, flowers and siliques.

Its subcellular location is the plastid. It is found in the chloroplast. The catalysed reaction is a sn-glycero-3-phosphodiester + H2O = an alcohol + sn-glycerol 3-phosphate + H(+). Its function is as follows. Hydrolyzes glycerolphosphoglycerol, glycerophosphocholine and glycerophosphoethanolamine in vitro. May be involved in release of inorganic phosphate (Pi) from phospholipids during Pi starvation. The protein is Glycerophosphodiester phosphodiesterase GDPD1, chloroplastic of Arabidopsis thaliana (Mouse-ear cress).